The sequence spans 301 residues: Phosphatidylserine decarboxylase proenzyme (301 aa).

Catalysis depends on charge relay system; for autoendoproteolytic cleavage activity residues aspartate 115, histidine 171, and serine 258. Serine 258 acts as the Schiff-base intermediate with substrate; via pyruvic acid; for decarboxylase activity in catalysis. Serine 258 is modified (pyruvic acid (Ser); by autocatalysis).

This sequence belongs to the phosphatidylserine decarboxylase family. PSD-B subfamily. Prokaryotic type II sub-subfamily. As to quaternary structure, heterodimer of a large membrane-associated beta subunit and a small pyruvoyl-containing alpha subunit. Pyruvate serves as cofactor. Post-translationally, is synthesized initially as an inactive proenzyme. Formation of the active enzyme involves a self-maturation process in which the active site pyruvoyl group is generated from an internal serine residue via an autocatalytic post-translational modification. Two non-identical subunits are generated from the proenzyme in this reaction, and the pyruvate is formed at the N-terminus of the alpha chain, which is derived from the carboxyl end of the proenzyme. The autoendoproteolytic cleavage occurs by a canonical serine protease mechanism, in which the side chain hydroxyl group of the serine supplies its oxygen atom to form the C-terminus of the beta chain, while the remainder of the serine residue undergoes an oxidative deamination to produce ammonia and the pyruvoyl prosthetic group on the alpha chain. During this reaction, the Ser that is part of the protease active site of the proenzyme becomes the pyruvoyl prosthetic group, which constitutes an essential element of the active site of the mature decarboxylase.

The protein resides in the cell membrane. It catalyses the reaction a 1,2-diacyl-sn-glycero-3-phospho-L-serine + H(+) = a 1,2-diacyl-sn-glycero-3-phosphoethanolamine + CO2. The protein operates within phospholipid metabolism; phosphatidylethanolamine biosynthesis; phosphatidylethanolamine from CDP-diacylglycerol: step 2/2. Its function is as follows. Catalyzes the formation of phosphatidylethanolamine (PtdEtn) from phosphatidylserine (PtdSer). The polypeptide is Phosphatidylserine decarboxylase proenzyme (Chlamydia pneumoniae (Chlamydophila pneumoniae)).